The following is a 428-amino-acid chain: Spermidine/putrescine import ATP-binding protein PotA (428 aa).

The ABC transporter domain maps to 6 to 238 (IEFKNVSKTY…PINHFVADFI (233 aa)). An ATP-binding site is contributed by 40–47 (GASGSGKS).

Belongs to the ABC transporter superfamily. Spermidine/putrescine importer (TC 3.A.1.11.1) family. The complex is composed of two ATP-binding proteins (PotA), two transmembrane proteins (PotB and PotC) and a solute-binding protein (PotD).

The protein localises to the cell membrane. The catalysed reaction is ATP + H2O + polyamine-[polyamine-binding protein]Side 1 = ADP + phosphate + polyamineSide 2 + [polyamine-binding protein]Side 1.. Functionally, part of the ABC transporter complex PotABCD involved in spermidine/putrescine import. Responsible for energy coupling to the transport system. This chain is Spermidine/putrescine import ATP-binding protein PotA, found in Lactococcus lactis subsp. lactis (strain IL1403) (Streptococcus lactis).